Reading from the N-terminus, the 476-residue chain is Aspartyl/glutamyl-tRNA(Asn/Gln) amidotransferase subunit B (476 aa).

This sequence belongs to the GatB/GatE family. GatB subfamily. Heterotrimer of A, B and C subunits.

The enzyme catalyses L-glutamyl-tRNA(Gln) + L-glutamine + ATP + H2O = L-glutaminyl-tRNA(Gln) + L-glutamate + ADP + phosphate + H(+). It carries out the reaction L-aspartyl-tRNA(Asn) + L-glutamine + ATP + H2O = L-asparaginyl-tRNA(Asn) + L-glutamate + ADP + phosphate + 2 H(+). Its function is as follows. Allows the formation of correctly charged Asn-tRNA(Asn) or Gln-tRNA(Gln) through the transamidation of misacylated Asp-tRNA(Asn) or Glu-tRNA(Gln) in organisms which lack either or both of asparaginyl-tRNA or glutaminyl-tRNA synthetases. The reaction takes place in the presence of glutamine and ATP through an activated phospho-Asp-tRNA(Asn) or phospho-Glu-tRNA(Gln). The chain is Aspartyl/glutamyl-tRNA(Asn/Gln) amidotransferase subunit B from Thermosipho melanesiensis (strain DSM 12029 / CIP 104789 / BI429).